A 266-amino-acid chain; its full sequence is Pyrrolizixenacetamide deacetylase (266 aa).

Acetate is bound at residue T28. The active-site Nucleophile is S94. L95 contributes to the acetate binding site. Active-site charge relay system residues include D215 and H242. Residue H242 participates in acetate binding.

The protein belongs to the AB hydrolase superfamily. Homodimer.

The enzyme catalyses pyrrolizixenacetamide + H2O = 3-amino-5,6,7,7a-tetrahydro-1H-pyrrolizin-1-one + acetate + H(+). Functionally, involved in the biosynthetic pathway of pyrrolizwilline, a pyrrolizidine alkaloid. Catalyzes the N-deacetylation of pyrrolizixenacetamide. The chain is Pyrrolizixenacetamide deacetylase from Xenorhabdus hominickii.